The chain runs to 205 residues: Histone H1, early embryonic (205 aa).

Disordered regions lie at residues 1–21 (MAEK…HPPA) and 94–205 (AKAQ…AKSK). The region spanning 17–91 (AHPPAAEMVA…GASGSFKVNV (75 aa)) is the H15 domain. Positions 98–124 (ASEKAKKEKEKAKLLAQREKAKEKGCS) are enriched in basic and acidic residues. 2 stretches are compositionally biased toward basic residues: residues 135 to 150 (PKKV…KPVK) and 157 to 205 (EKKK…AKSK).

The protein belongs to the histone H1/H5 family.

Its subcellular location is the nucleus. It is found in the chromosome. Its function is as follows. Histones H1 are necessary for the condensation of nucleosome chains into higher-order structures. The polypeptide is Histone H1, early embryonic (Strongylocentrotus purpuratus (Purple sea urchin)).